Consider the following 390-residue polypeptide: Cytochrome b (390 aa).

4 helical membrane passes run M32–M52, W76–G98, L113–C133, and F179–M199. Residues H82 and H96 each contribute to the heme b site. H183 and H197 together coordinate heme b. A ubiquinone is bound at residue H202. 4 helical membrane passes run F225–F245, L289–D309, L321–A341, and Y348–P368.

Belongs to the cytochrome b family. Fungal cytochrome b-c1 complex contains 10 subunits; 3 respiratory subunits, 2 core proteins and 5 low-molecular weight proteins. Cytochrome b-c1 complex is a homodimer. The cofactor is heme b.

It is found in the mitochondrion inner membrane. Its function is as follows. Component of the ubiquinol-cytochrome c reductase complex (complex III or cytochrome b-c1 complex) that is part of the mitochondrial respiratory chain. The b-c1 complex mediates electron transfer from ubiquinol to cytochrome c. Contributes to the generation of a proton gradient across the mitochondrial membrane that is then used for ATP synthesis. The sequence is that of Cytochrome b (COB) from Naumovozyma castellii (Yeast).